A 560-amino-acid polypeptide reads, in one-letter code: Nucleoprotein (560 aa).

The interval 54 to 236 (LRKAKRSDAD…ITRDESAVNI (183 aa)) is binding site for the cap structure m7GTP. Residues 323 to 332 (GRSWDNTSVD) are compositionally biased toward polar residues. The interval 323–349 (GRSWDNTSVDLNPKPDPGPRAPEKNGQ) is disordered. 2 residues coordinate Mn(2+): D380 and E382. Zn(2+) is bound by residues E390, C497, H500, and C521. D525 contributes to the Mn(2+) binding site.

It belongs to the arenaviridae nucleocapsid protein family. Homomultimerizes to form the nucleocapsid. Binds to viral genomic RNA. Interacts with glycoprotein G2. Interacts with protein Z; this interaction probably directs the encapsidated genome to budding sites. Interacts with protein L; this interaction does not interfere with Z-L interaction. Interacts with host IKBKE (via Protein kinase domain); the interaction inhibits IKBKE kinase activity.

Its subcellular location is the virion. It is found in the host cytoplasm. Functionally, encapsidates the genome, protecting it from nucleases. The encapsidated genomic RNA is termed the nucleocapsid (NC). Serves as template for viral transcription and replication. The increased presence of protein N in host cell does not seem to trigger the switch from transcription to replication as observed in other negative strain RNA viruses. Through the interaction with host IKBKE, strongly inhibits the phosphorylation and nuclear translocation of host IRF3, a protein involved in interferon activation pathway, leading to the inhibition of interferon-beta and IRF3-dependent promoters activation. Also encodes a functional 3'-5' exoribonuclease that degrades preferentially dsRNA substrates and thereby participates in the suppression of interferon induction. The protein is Nucleoprotein of Cupixi mammarenavirus (isolate Rat/Brasil/BeAn 119303/1970) (CPXV).